We begin with the raw amino-acid sequence, 245 residues long: Tryptophan synthase alpha chain (245 aa).

Active-site proton acceptor residues include Glu35 and Asp46.

This sequence belongs to the TrpA family. In terms of assembly, tetramer of two alpha and two beta chains.

It catalyses the reaction (1S,2R)-1-C-(indol-3-yl)glycerol 3-phosphate + L-serine = D-glyceraldehyde 3-phosphate + L-tryptophan + H2O. It functions in the pathway amino-acid biosynthesis; L-tryptophan biosynthesis; L-tryptophan from chorismate: step 5/5. Its function is as follows. The alpha subunit is responsible for the aldol cleavage of indoleglycerol phosphate to indole and glyceraldehyde 3-phosphate. This chain is Tryptophan synthase alpha chain, found in Sulfurisphaera tokodaii (strain DSM 16993 / JCM 10545 / NBRC 100140 / 7) (Sulfolobus tokodaii).